The chain runs to 349 residues: 11-beta-hydroxysteroid dehydrogenase A (349 aa).

Residues 10 to 30 (LVAPPFTFFFLCLFLPPYWGL) form a helical; Signal-anchor for type II membrane protein membrane-spanning segment. The short motif at 13-26 (PPFTFFFLCLFLPP) is the Proline-knob element. NADP(+)-binding positions include 54 to 80 (GASS…SARR), Asp-105, and 132 to 135 (NAAI). Residue Ser-184 coordinates substrate. Tyr-197 functions as the Proton acceptor in the catalytic mechanism. NADP(+)-binding positions include 197–201 (YSASK) and Lys-201.

Belongs to the short-chain dehydrogenases/reductases (SDR) family. Expressed in seeds (at protein level).

Its subcellular location is the lipid droplet. The protein resides in the membrane. It carries out the reaction an 11beta-hydroxysteroid + NADP(+) = an 11-oxosteroid + NADPH + H(+). Its function is as follows. Has dehydrogenase activity against 11 beta-hydroxysteroid and 17 beta-hydroxysteroid. May be involved in signal transduction regulated by various sterols. This is 11-beta-hydroxysteroid dehydrogenase A from Arachis hypogaea (Peanut).